The primary structure comprises 354 residues: 3'-hydroxy-N-methyl-(S)-coclaurine 4'-O-methyltransferase 1 (354 aa).

D223 provides a ligand contact to S-adenosyl-L-methionine. The active-site Proton acceptor is the H261.

The protein belongs to the class I-like SAM-binding methyltransferase superfamily. Cation-independent O-methyltransferase family. COMT subfamily. As to expression, expressed in roots, stems, leaves and flowers. Restricted to sieve elements of the phloem adjacent or proximal to laticifers.

It carries out the reaction (S)-3'-hydroxy-N-methylcoclaurine + S-adenosyl-L-methionine = (S)-reticuline + S-adenosyl-L-homocysteine + H(+). The protein operates within alkaloid biosynthesis; (S)-reticuline biosynthesis; (S)-reticuline from (S)-norcoclaurine: step 4/4. Involved in the biosynthesis of benzylisoquinoline alkaloids. Catalyzes the transfer of the methyl group to the 4'-hydroxyl group of 3'-hydroxy-N-methylcoclaurine to form reticuline. Also involved in the papaverine biosynthesis. The sequence is that of 3'-hydroxy-N-methyl-(S)-coclaurine 4'-O-methyltransferase 1 from Papaver somniferum (Opium poppy).